We begin with the raw amino-acid sequence, 272 residues long: Imidazole glycerol phosphate synthase subunit HisF (272 aa).

Residues aspartate 11 and aspartate 130 contribute to the active site.

Belongs to the HisA/HisF family. Heterodimer of HisH and HisF.

It is found in the cytoplasm. The catalysed reaction is 5-[(5-phospho-1-deoxy-D-ribulos-1-ylimino)methylamino]-1-(5-phospho-beta-D-ribosyl)imidazole-4-carboxamide + L-glutamine = D-erythro-1-(imidazol-4-yl)glycerol 3-phosphate + 5-amino-1-(5-phospho-beta-D-ribosyl)imidazole-4-carboxamide + L-glutamate + H(+). It functions in the pathway amino-acid biosynthesis; L-histidine biosynthesis; L-histidine from 5-phospho-alpha-D-ribose 1-diphosphate: step 5/9. In terms of biological role, IGPS catalyzes the conversion of PRFAR and glutamine to IGP, AICAR and glutamate. The HisF subunit catalyzes the cyclization activity that produces IGP and AICAR from PRFAR using the ammonia provided by the HisH subunit. This Methanococcus vannielii (strain ATCC 35089 / DSM 1224 / JCM 13029 / OCM 148 / SB) protein is Imidazole glycerol phosphate synthase subunit HisF.